The following is a 315-amino-acid chain: MSGPNIVHSGYGLRCEKLDKPLNLGWGLDNSAVLHWPGELPTGWLCDALDQIFIAAPQLSAVVLPWSEWCEEPQALTLFGQVQSDIIHRSAFWQLPLWLSSPANRASGEMVFDAEREIYFPQRPPRPQGEVYRRYDPRIRRMLSFRIADPVSDAERFTRWMNDPRVEYFWEQSGSLEVQIAYLERQLTSKHAFPLIGCFDDRPVSNIEIYWAAEDRIGRHYSWQPFDRGLHLLVGEQQWRGAHYVQSWLRGVTHYLLLNEPRTQRTVLEPRTDNQRLFRHLEPAGYRTIKEFDFPHKRSRMVMADRHHFFTEVGL.

The protein belongs to the IucB family.

The protein localises to the cytoplasm. The protein resides in the cell membrane. It catalyses the reaction N(6)-hydroxy-L-lysine + acetyl-CoA = N(6)-acetyl-N(6)-hydroxy-L-lysine + CoA. It participates in siderophore biosynthesis; aerobactin biosynthesis. Its function is as follows. Catalyzes the transfer of acetyl from acetyl-CoA to the N-hydroxylysine. Involved in the biosynthesis of the siderophore aerobactin which is a chelator that mediates the high-affinity iron transport systems induced under iron-stressed conditions. The protein is N(6)-hydroxylysine O-acetyltransferase (iucB) of Escherichia coli.